We begin with the raw amino-acid sequence, 122 residues long: MIQQESRLKVADNTGAREILCIRVLGGSGRRYAGIGDVIIATVKDALPGAGVKKGDVVKAVVVRTAKERRRPDGSYIKFDENAAVLIKDGGDPRGTRIFGPVGRELREKKFMRIISLAPEVL.

It belongs to the universal ribosomal protein uL14 family. As to quaternary structure, part of the 50S ribosomal subunit. Forms a cluster with proteins L3 and L19. In the 70S ribosome, L14 and L19 interact and together make contacts with the 16S rRNA in bridges B5 and B8.

Functionally, binds to 23S rRNA. Forms part of two intersubunit bridges in the 70S ribosome. This chain is Large ribosomal subunit protein uL14, found in Acidothermus cellulolyticus (strain ATCC 43068 / DSM 8971 / 11B).